Consider the following 279-residue polypeptide: Shikimate dehydrogenase (NADP(+)) (279 aa).

Shikimate contacts are provided by residues 20–22 (SRS) and Thr-67. Catalysis depends on Lys-71, which acts as the Proton acceptor. Residue Asp-83 participates in NADP(+) binding. Asn-92 and Asp-108 together coordinate shikimate. NADP(+) is bound by residues 134 to 138 (GAGGA) and Leu-223. Tyr-225 is a shikimate binding site. Position 246 (Gly-246) interacts with NADP(+).

Belongs to the shikimate dehydrogenase family. Homodimer.

The catalysed reaction is shikimate + NADP(+) = 3-dehydroshikimate + NADPH + H(+). The protein operates within metabolic intermediate biosynthesis; chorismate biosynthesis; chorismate from D-erythrose 4-phosphate and phosphoenolpyruvate: step 4/7. Involved in the biosynthesis of the chorismate, which leads to the biosynthesis of aromatic amino acids. Catalyzes the reversible NADPH linked reduction of 3-dehydroshikimate (DHSA) to yield shikimate (SA). This is Shikimate dehydrogenase (NADP(+)) from Cereibacter sphaeroides (strain KD131 / KCTC 12085) (Rhodobacter sphaeroides).